We begin with the raw amino-acid sequence, 670 residues long: Methionine--tRNA ligase (670 aa).

Residues 14 to 24 (PYANGHLHLGH) carry the 'HIGH' region motif. 4 residues coordinate Zn(2+): cysteine 145, cysteine 148, cysteine 158, and cysteine 161. A 'KMSKS' region motif is present at residues 330–334 (KMSKS). An ATP-binding site is contributed by lysine 333. The region spanning 570 to 670 (DFAKVDLRIA…AGALPGMKVK (101 aa)) is the tRNA-binding domain.

It belongs to the class-I aminoacyl-tRNA synthetase family. MetG type 1 subfamily. In terms of assembly, homodimer. It depends on Zn(2+) as a cofactor.

The protein localises to the cytoplasm. It catalyses the reaction tRNA(Met) + L-methionine + ATP = L-methionyl-tRNA(Met) + AMP + diphosphate. Its function is as follows. Is required not only for elongation of protein synthesis but also for the initiation of all mRNA translation through initiator tRNA(fMet) aminoacylation. The polypeptide is Methionine--tRNA ligase (Legionella pneumophila subsp. pneumophila (strain Philadelphia 1 / ATCC 33152 / DSM 7513)).